Here is a 334-residue protein sequence, read N- to C-terminus: Phospho-N-acetylmuramoyl-pentapeptide-transferase (334 aa).

The next 9 helical transmembrane spans lie at 5–25, 52–72, 81–101, 116–136, 148–168, 181–200, 230–250, 256–276, and 309–329; these read VVWL…PVTI, PTMG…VLLV, GLVV…DDFI, KILG…FKLG, GISF…VLLG, GLAS…LALV, VFMG…GAVV, LLVV…IQVI, and FWLL…DFWL.

This sequence belongs to the glycosyltransferase 4 family. MraY subfamily. Requires Mg(2+) as cofactor.

It is found in the cell membrane. The catalysed reaction is UDP-N-acetyl-alpha-D-muramoyl-L-alanyl-gamma-D-glutamyl-meso-2,6-diaminopimeloyl-D-alanyl-D-alanine + di-trans,octa-cis-undecaprenyl phosphate = di-trans,octa-cis-undecaprenyl diphospho-N-acetyl-alpha-D-muramoyl-L-alanyl-D-glutamyl-meso-2,6-diaminopimeloyl-D-alanyl-D-alanine + UMP. It participates in cell wall biogenesis; peptidoglycan biosynthesis. In terms of biological role, catalyzes the initial step of the lipid cycle reactions in the biosynthesis of the cell wall peptidoglycan: transfers peptidoglycan precursor phospho-MurNAc-pentapeptide from UDP-MurNAc-pentapeptide onto the lipid carrier undecaprenyl phosphate, yielding undecaprenyl-pyrophosphoryl-MurNAc-pentapeptide, known as lipid I. The sequence is that of Phospho-N-acetylmuramoyl-pentapeptide-transferase from Desulforamulus reducens (strain ATCC BAA-1160 / DSM 100696 / MI-1) (Desulfotomaculum reducens).